The following is a 101-amino-acid chain: Small ribosomal subunit protein uS14 (101 aa).

This sequence belongs to the universal ribosomal protein uS14 family. As to quaternary structure, part of the 30S ribosomal subunit. Contacts proteins S3 and S10.

Its function is as follows. Binds 16S rRNA, required for the assembly of 30S particles and may also be responsible for determining the conformation of the 16S rRNA at the A site. The protein is Small ribosomal subunit protein uS14 of Shewanella baltica (strain OS155 / ATCC BAA-1091).